We begin with the raw amino-acid sequence, 362 residues long: Type-2 angiotensin II receptor (362 aa).

Over 1–44 the chain is Extracellular; the sequence is MKANFSLATISKNITSSLHVGFVNISSNESTFNCSHKPSDKHLD. Residues asparagine 4, asparagine 13, asparagine 24, asparagine 28, and asparagine 33 are each glycosylated (N-linked (GlcNAc...) asparagine). 2 disulfide bridges follow: cysteine 34/cysteine 289 and cysteine 116/cysteine 194. The helical transmembrane segment at 45-69 threads the bilayer; sequence AIPVLYYIIFGVGFLVNTIVVTLFC. At 70–79 the chain is on the cytoplasmic side; the sequence is CQKGPKKVSS. Residues 80–103 traverse the membrane as a helical segment; the sequence is IYIFNLAVADLLLLATLPLWATYY. Angiotensin II contacts are provided by tyrosine 102 and tyrosine 103. Residues 104 to 113 lie on the Extracellular side of the membrane; the sequence is SHRYDWIFGP. The helical transmembrane segment at 114-139 threads the bilayer; the sequence is VMCKVFGSFLTLNMFASIFFITCMSV. At 140 to 158 the chain is on the cytoplasmic side; the sequence is DRYQSVIYPFLSQRRNPWQ. The chain crosses the membrane as a helical span at residues 159 to 180; the sequence is ASYIVPLVWCMACLSSLPTFYF. Angiotensin II contacts are provided by arginine 181, tyrosine 203, and lysine 214. Residues 181–205 are Extracellular-facing; the sequence is RDVRTIEYLGVNACIMAFPPEKYAQ. The chain crosses the membrane as a helical span at residues 206–231; the sequence is WSAGIALMKNILGFIIPLIFIATCYF. At 232–256 the chain is on the cytoplasmic side; the sequence is GIRKHLLKTNSYGKNRITRDQVLKM. The chain crosses the membrane as a helical span at residues 257–280; the sequence is AAAVVLAFIICWLPFHVLTFLDAL. Aspartate 278 provides a ligand contact to angiotensin II. Residues 281–293 are Extracellular-facing; sequence AWMGVINSCEVIA. A helical membrane pass occupies residues 294-319; the sequence is VIDLALPFAILLGFTNSCINPFLYCF. An angiotensin II-binding site is contributed by aspartate 296. Residues 320-362 lie on the Cytoplasmic side of the membrane; the sequence is VGNRFQQKLRRVFRVPITWLQGKRENGSCGKSSSFREMETFVS. The helix VIII stretch occupies residues 323–332; the sequence is RFQQKLRRVF.

The protein belongs to the G-protein coupled receptor 1 family. In terms of assembly, interacts with MTUS1.

Its subcellular location is the cell membrane. Its function is as follows. Receptor for angiotensin II, a vasoconstricting peptide. Signals primarily via a non-canonical G-protein- and beta-arrestin independent pathways. Cooperates with MTUS1 to inhibit ERK2 activation and cell proliferation. This chain is Type-2 angiotensin II receptor (AGTR2), found in Ovis aries (Sheep).